A 2647-amino-acid polypeptide reads, in one-letter code: Filamin-A (2647 aa).

Residues 1-37 (MSSSHSRCGQSAAVASPGGSIDSRDAEMPATEKDLAE) are disordered. N-acetylserine is present on Ser2. Positions 2-274 (SSSHSRCGQS…PKAKLKPGAP (273 aa)) are actin-binding. Phosphoserine occurs at positions 11, 16, and 20. Residues 22-37 (DSRDAEMPATEKDLAE) show a composition bias toward basic and acidic residues. Residues Lys42, Lys43, and Lys135 each participate in a glycyl lysine isopeptide (Lys-Gly) (interchain with G-Cter in ubiquitin) cross-link. 2 Calponin-homology (CH) domains span residues 43 to 149 (KIQQ…LHYS) and 166 to 269 (QTPK…KAKL). Residues 271–294 (PGAPLRPKLNPKKARAYGPGIEPT) form a disordered region. 15 Filamin repeats span residues 276–374 (RPKL…EVYV), 376–474 (KSQG…TVTV), 475–570 (GQAC…EVKV), 571–663 (GTEC…MADI), 667–763 (PQDF…RVNV), 764–866 (GAGS…RVKV), 867–965 (EPSH…SVGV), 966–1061 (SPSL…PLEA), 1062–1154 (VAPT…KAHV), 1155–1249 (APCF…KLQV), 1250–1349 (EPAV…QVPV), 1350–1442 (TEGC…KVPV), 1443–1539 (HDVT…KVKV), 1540–1636 (LPTH…RVRA), and 1641–1740 (DASK…QVTA). A Glycyl lysine isopeptide (Lys-Gly) (interchain with G-Cter in SUMO1); alternate cross-link involves residue Lys299. Residue Lys299 forms a Glycyl lysine isopeptide (Lys-Gly) (interchain with G-Cter in SUMO2); alternate linkage. Residues Lys376 and Lys508 each carry the N6-acetyllysine modification. An N6-acetyllysine mark is found at Lys700, Lys781, Lys837, Lys865, and Lys906. Phosphoserine is present on residues Ser968 and Ser1055. An N6-acetyllysine; alternate modification is found at Lys1071. Lys1071 is subject to N6-succinyllysine; alternate. At Ser1084 the chain carries Phosphoserine. Thr1089 is modified (phosphothreonine). Phosphoserine occurs at positions 1301 and 1338. At Lys1372 the chain carries N6-acetyllysine. Residues Ser1459 and Ser1533 each carry the phosphoserine modification. The interaction with furin stretch occupies residues 1490–1607 (PKGLVEPVDV…DNHDGTYTVA (118 aa)). An N6-acetyllysine modification is found at Lys1538. Phosphoserine is present on residues Ser1630 and Ser1734. The segment at 1741–1778 (LAGDQPTVQTPLRSQQLAPQYNYPQGSQQTWIPERPMV) is hinge 1. Residue Thr1750 is modified to Phosphothreonine. Filamin repeat units lie at residues 1765 to 1860 (QGSQ…QFYV), 1861 to 1952 (DYVN…TARV), 1953 to 2039 (TGDD…PVVI), 2042 to 2134 (SEIG…SVKV), 2135 to 2230 (TGEG…QFTV), 2233 to 2325 (LGEG…VVPV), 2327 to 2420 (SPSG…KIRV), and 2424 to 2516 (GHGG…KAKV). Phosphoserine is present on Ser1835. Phosphoserine is present on residues Ser1967, Ser2053, Ser2128, Ser2152, Ser2158, Ser2163, Ser2180, Ser2284, Ser2327, and Ser2329. The residue at position 2336 (Thr2336) is a Phosphothreonine. 6 positions are modified to phosphoserine: Ser2338, Ser2370, Ser2414, Ser2510, Ser2523, and Ser2526. Positions 2517-2553 (TGPRLVSNHSLHETSSVFVDSLTKVATVPQHATSGPG) are hinge 2. Positions 2517–2647 (TGPRLVSNHS…PGSPYRIMVP (131 aa)) are self-association site, tail. A Filamin 24 repeat occupies 2552–2646 (PGPADVSKVV…IPGSPYRIMV (95 aa)). Residue Lys2569 is modified to N6-acetyllysine; alternate. Position 2569 is an N6-succinyllysine; alternate (Lys2569). Residue Lys2575 is modified to N6-acetyllysine. Thr2599 carries the post-translational modification Phosphothreonine. An N6-acetyllysine mark is found at Lys2607 and Lys2621.

Belongs to the filamin family. Homodimer. Interacts with FCGR1A, FLNB, FURIN, HSPB7, KCND2, INPPL1, MYOT, MYOZ1, PDLIM2, ARHGAP24, PSEN1, PSEN2 and ECSCR. Also interacts with various other binding partners in addition to filamentous actin. Interacts (via N-terminus) with TAF1B. Interacts (via N-terminus) with MIS18BP1 (via N-terminus). Interacts with TMEM67 (via C-terminus) and MKS1. Interacts (via actin-binding domain) with MICALL2 (via calponin-homology (CH) domain). Interacts with RFLNA and RFLNB. Interacts (via filamin repeat 5) with SYK; docks SYK to the plasma membrane. Interacts (via filamin repeats 19 and 21) with DRD3; increased PKA-mediated phosphorylation at Ser-2152. Interacts (via filamin repeat 21) with MAS1, AGTR1 and ADRA1D; increases PKA-mediated phosphorylation of FLNA at Ser-2152. Interacts (via filamin repeats 4, 9, 12, 17, 19, 21, and 23) with GP1BA (high affinity), ITGB7, ITGB2 and FBLIM1. Interacts with CEACAM1 (via cytoplasmic domain); inhibits cell migration and cell scattering by interfering with the interaction between FLNA and RALA. Interacts with FOXC1. Interacts (via calponin-homology (CH) domain 1 and filamin repeat 24) with CRMP1; the interaction alters FLNA ternary structure and thus promotes FLNA dissociation from F-actin. Interacts with DPYSL3/CRMP3 and DPYSL4/CRMP4. In terms of processing, phosphorylation at Ser-2152 is negatively regulated by the autoinhibited conformation of filamin repeats 19-21. Ligand binding induces a conformational switch triggering phosphorylation at Ser-2152 by PKA. Post-translationally, polyubiquitination in the CH1 domain by a SCF-like complex containing ASB2 leads to proteasomal degradation. Prior dissociation from actin may be required to expose the target lysines. Ubiquitinated in endothelial cells by RNF213 downstream of the non-canonical Wnt signaling pathway, leading to its degradation by the proteasome. Widely expressed. Highly expressed in Purkinje cells.

Its subcellular location is the cytoplasm. It is found in the cell cortex. The protein resides in the cytoskeleton. The protein localises to the perikaryon. It localises to the cell projection. Its subcellular location is the growth cone. It is found in the podosome. Actin binding protein that promotes orthogonal branching of actin filaments and links actin filaments to membrane glycoproteins. Anchors various transmembrane proteins to the actin cytoskeleton and serves as a scaffold for a wide range of cytoplasmic signaling proteins. Interaction with FLNB may allow neuroblast migration from the ventricular zone into the cortical plate. Tethers cell surface-localized furin, modulates its rate of internalization and directs its intracellular trafficking. Involved in ciliogenesis. Plays a role in cell-cell contacts and adherens junctions during the development of blood vessels, heart and brain organs. Plays a role in platelets morphology through interaction with SYK that regulates ITAM- and ITAM-like-containing receptor signaling, resulting in by platelet cytoskeleton organization maintenance. During the axon guidance process, required for growth cone collapse induced by SEMA3A-mediated stimulation of neurons. This Mus musculus (Mouse) protein is Filamin-A (Flna).